The following is a 321-amino-acid chain: Polyamine aminopropyltransferase (321 aa).

The 234-residue stretch at 23-256 folds into the PABS domain; that stretch reads HLLYLEHAGP…DEWSFSFGSD (234 aa). An S-methyl-5'-thioadenosine-binding site is contributed by glutamine 53. Spermidine is bound by residues histidine 84 and aspartate 108. S-methyl-5'-thioadenosine-binding positions include glutamate 127 and 159–160; that span reads DG. Catalysis depends on aspartate 177, which acts as the Proton acceptor.

Belongs to the spermidine/spermine synthase family. In terms of assembly, homodimer or homotetramer.

It localises to the cytoplasm. It catalyses the reaction S-adenosyl 3-(methylsulfanyl)propylamine + putrescine = S-methyl-5'-thioadenosine + spermidine + H(+). Its pathway is amine and polyamine biosynthesis; spermidine biosynthesis; spermidine from putrescine: step 1/1. Catalyzes the irreversible transfer of a propylamine group from the amino donor S-adenosylmethioninamine (decarboxy-AdoMet) to putrescine (1,4-diaminobutane) to yield spermidine. The protein is Polyamine aminopropyltransferase of Korarchaeum cryptofilum (strain OPF8).